Reading from the N-terminus, the 139-residue chain is Sec-independent protein translocase protein TatB (139 aa).

Residues 1-21 form a helical membrane-spanning segment; sequence MFDMGFLELMLIGVVALLVLG. Over residues 66–86 the composition is skewed to basic and acidic residues; it reads QQRKLDAGLGKVRDEVERHGD. A disordered region spans residues 66 to 139; sequence QQRKLDAGLG…APSAKDSNAP (74 aa).

Belongs to the TatB family. The Tat system comprises two distinct complexes: a TatABC complex, containing multiple copies of TatA, TatB and TatC subunits, and a separate TatA complex, containing only TatA subunits. Substrates initially bind to the TatABC complex, which probably triggers association of the separate TatA complex to form the active translocon.

Its subcellular location is the cell inner membrane. Functionally, part of the twin-arginine translocation (Tat) system that transports large folded proteins containing a characteristic twin-arginine motif in their signal peptide across membranes. Together with TatC, TatB is part of a receptor directly interacting with Tat signal peptides. TatB may form an oligomeric binding site that transiently accommodates folded Tat precursor proteins before their translocation. The protein is Sec-independent protein translocase protein TatB of Chromohalobacter salexigens (strain ATCC BAA-138 / DSM 3043 / CIP 106854 / NCIMB 13768 / 1H11).